A 316-amino-acid polypeptide reads, in one-letter code: Secondary metabolism regulator LAE1 (316 aa).

This sequence belongs to the methyltransferase superfamily. LaeA methyltransferase family. In terms of assembly, component of the heterotrimeric velvet complex composed of LAE1, VEL1 and VEL2; VEL1 acting as a bridging protein between LAE1 and VEL2. Interacts with VEL1.

It localises to the nucleus. The catalysed reaction is L-methionyl-[protein] + S-adenosyl-L-methionine = S-methyl-L-methionyl-[protein] + S-adenosyl-L-homocysteine. Methyltransferase that performs automethylation. No other methyl-accepting substrate has been identified yet. Component of the velvet transcription factor complex that acts as a global regulator for secondary metabolite gene expression. Controls the expression of the gibberellins gene clusters, but does not affect bikaverin production. Controls the expression of the fusaric acid gene cluster. Acts as a virulence factors during infection, most likely through activation of gibberellins biosynthesis. In Gibberella fujikuroi (strain CBS 195.34 / IMI 58289 / NRRL A-6831) (Bakanae and foot rot disease fungus), this protein is Secondary metabolism regulator LAE1.